The following is a 158-amino-acid chain: MKISLSLQQDFQSPELELKRAQLKKIIETTLRHVGYKEDCEIGIACVDLEESHQLNLQYREKDKPTNVLSFPSDIPEEVLPMLDALPLGDLVICIPVVLQEALEQKKTAQNHFAHLLVHGVLHLLGYDHETSDEDAEEMEGLEIEILAKLNIANPYQE.

Residues His119, His123, and His129 each contribute to the Zn(2+) site.

This sequence belongs to the endoribonuclease YbeY family. Requires Zn(2+) as cofactor.

Its subcellular location is the cytoplasm. Single strand-specific metallo-endoribonuclease involved in late-stage 70S ribosome quality control and in maturation of the 3' terminus of the 16S rRNA. The protein is Endoribonuclease YbeY of Acinetobacter baumannii (strain ACICU).